The following is a 218-amino-acid chain: Elongation factor Ts (218 aa).

Positions 82-85 (TDFV) are involved in Mg(2+) ion dislocation from EF-Tu.

The protein belongs to the EF-Ts family.

The protein resides in the cytoplasm. Its function is as follows. Associates with the EF-Tu.GDP complex and induces the exchange of GDP to GTP. It remains bound to the aminoacyl-tRNA.EF-Tu.GTP complex up to the GTP hydrolysis stage on the ribosome. The protein is Elongation factor Ts of Prochlorococcus marinus (strain NATL1A).